The sequence spans 521 residues: Bifunctional purine biosynthesis protein PurH (521 aa).

One can recognise an MGS-like domain in the interval 1–150; the sequence is MSEDRKAIKR…KNHPSVAVVT (150 aa).

Belongs to the PurH family.

The catalysed reaction is (6R)-10-formyltetrahydrofolate + 5-amino-1-(5-phospho-beta-D-ribosyl)imidazole-4-carboxamide = 5-formamido-1-(5-phospho-D-ribosyl)imidazole-4-carboxamide + (6S)-5,6,7,8-tetrahydrofolate. It carries out the reaction IMP + H2O = 5-formamido-1-(5-phospho-D-ribosyl)imidazole-4-carboxamide. It functions in the pathway purine metabolism; IMP biosynthesis via de novo pathway; 5-formamido-1-(5-phospho-D-ribosyl)imidazole-4-carboxamide from 5-amino-1-(5-phospho-D-ribosyl)imidazole-4-carboxamide (10-formyl THF route): step 1/1. It participates in purine metabolism; IMP biosynthesis via de novo pathway; IMP from 5-formamido-1-(5-phospho-D-ribosyl)imidazole-4-carboxamide: step 1/1. The polypeptide is Bifunctional purine biosynthesis protein PurH (Corynebacterium efficiens (strain DSM 44549 / YS-314 / AJ 12310 / JCM 11189 / NBRC 100395)).